The following is an 883-amino-acid chain: Alanine--tRNA ligase (883 aa).

Zn(2+) contacts are provided by H563, H567, C673, and H677.

The protein belongs to the class-II aminoacyl-tRNA synthetase family. Requires Zn(2+) as cofactor.

The protein localises to the cytoplasm. It carries out the reaction tRNA(Ala) + L-alanine + ATP = L-alanyl-tRNA(Ala) + AMP + diphosphate. Catalyzes the attachment of alanine to tRNA(Ala) in a two-step reaction: alanine is first activated by ATP to form Ala-AMP and then transferred to the acceptor end of tRNA(Ala). Also edits incorrectly charged Ser-tRNA(Ala) and Gly-tRNA(Ala) via its editing domain. The sequence is that of Alanine--tRNA ligase from Caulobacter sp. (strain K31).